The chain runs to 297 residues: Bifunctional protein FolD (297 aa).

Residues 168–170 (GRS), T197, and V238 contribute to the NADP(+) site.

It belongs to the tetrahydrofolate dehydrogenase/cyclohydrolase family. Homodimer.

It carries out the reaction (6R)-5,10-methylene-5,6,7,8-tetrahydrofolate + NADP(+) = (6R)-5,10-methenyltetrahydrofolate + NADPH. The catalysed reaction is (6R)-5,10-methenyltetrahydrofolate + H2O = (6R)-10-formyltetrahydrofolate + H(+). It functions in the pathway one-carbon metabolism; tetrahydrofolate interconversion. In terms of biological role, catalyzes the oxidation of 5,10-methylenetetrahydrofolate to 5,10-methenyltetrahydrofolate and then the hydrolysis of 5,10-methenyltetrahydrofolate to 10-formyltetrahydrofolate. This is Bifunctional protein FolD from Lawsonia intracellularis (strain PHE/MN1-00).